Consider the following 79-residue polypeptide: Sulfur carrier protein TusA (79 aa).

Residue cysteine 17 is the Cysteine persulfide intermediate of the active site.

The protein belongs to the sulfur carrier protein TusA family.

Its subcellular location is the cytoplasm. Its function is as follows. Sulfur carrier protein which probably makes part of a sulfur-relay system. This Haemophilus influenzae (strain PittEE) protein is Sulfur carrier protein TusA.